We begin with the raw amino-acid sequence, 38 residues long: Defensin-1 (38 aa).

3 disulfides stabilise this stretch: C4–C25, C11–C33, and C15–C35.

It is found in the secreted. Its function is as follows. Has antibacterial activity against the Gram-positive bacteria L.lactis and S.aureus, and against the Gram-negative bacteria E.coli D32 and V.parahemolyticus. This Crassostrea virginica (Eastern oyster) protein is Defensin-1.